The primary structure comprises 570 residues: Proline--tRNA ligase (570 aa).

This sequence belongs to the class-II aminoacyl-tRNA synthetase family. ProS type 1 subfamily. Homodimer.

Its subcellular location is the cytoplasm. It carries out the reaction tRNA(Pro) + L-proline + ATP = L-prolyl-tRNA(Pro) + AMP + diphosphate. Functionally, catalyzes the attachment of proline to tRNA(Pro) in a two-step reaction: proline is first activated by ATP to form Pro-AMP and then transferred to the acceptor end of tRNA(Pro). As ProRS can inadvertently accommodate and process non-cognate amino acids such as alanine and cysteine, to avoid such errors it has two additional distinct editing activities against alanine. One activity is designated as 'pretransfer' editing and involves the tRNA(Pro)-independent hydrolysis of activated Ala-AMP. The other activity is designated 'posttransfer' editing and involves deacylation of mischarged Ala-tRNA(Pro). The misacylated Cys-tRNA(Pro) is not edited by ProRS. The sequence is that of Proline--tRNA ligase from Clostridium botulinum (strain Eklund 17B / Type B).